Consider the following 709-residue polypeptide: MAQRHSDSSLEEKLLGHRFHSELRLDAGGNPASGLPMVRGSPRVRDDAAFQPQVPAPPQPRPPGHEEPWPIVLSTESPAALKLGTQQLIPKSLAVASKAKTPARHQSFGAAVLSREAARRDPKLLPAPSFSLDDMDVDKDPGGMLRRNLRNQSYRAAMKGLGKPGGQGDAIQLSPKLQALAEEPSQPHTRSPAKNKKTLGRKRGHKGSFKDDPQLYQEIQERGLNTSQESDDDILDESSSPEGTQKVDATIVVKSYRPAQVTWSQLPEVVELGILDQLSTEERKRQEAMFEILTSEFSYQHSLSILVEEFLQSKELRATVTQMEHHHLFSNILDVLGASQRFFEDLEQRHKAQVLVEDISDILEEHAEKHFHPYIAYCSNEVYQQRTLQKLISSNAAFREALREIERRPACGGLPMLSFLILPMQRVTRLPLLMDTLCLKTQGHSERYKAASRALKAISKLVRQCNEGAHRMERMEQMYTLHTQLDFSKVKSLPLISASRWLLKRGELFLVEETGLFRKIASRPTCYLFLFNDVLVVTKKKSEESYMVQDYAQMNHIQVEKIEPSELPLPGGGNRSSSVPHPFQVTLLRNSEGRQEQLLLSSDSASDRARWIVALTHSERQWQGLSSKGDLPQVEITKAFFAKQADEVTLQQADVVLVLQQEDGWLYGERLRDGETGWFPEDFARFITSRVAVEGNVRRMERLRVETDV.

At Ala-2 the chain carries N-acetylalanine. Residues Ser-6, Ser-41, and Ser-107 each carry the phosphoserine modification. The segment at 22 to 70 (ELRLDAGGNPASGLPMVRGSPRVRDDAAFQPQVPAPPQPRPPGHEEPWP) is disordered. Residues 114–146 (SREAARRDPKLLPAPSFSLDDMDVDKDPGGMLR) form a disordered region. A phosphoserine mark is found at Ser-174, Ser-191, and Ser-208. Residues 180-246 (LAEEPSQPHT…ESSSPEGTQK (67 aa)) are disordered. A compositionally biased stretch (basic residues) spans 191–207 (SPAKNKKTLGRKRGHKG). Phosphothreonine is present on Thr-226. A phosphoserine mark is found at Ser-227, Ser-230, and Ser-240. Positions 275 to 481 (LDQLSTEERK…MERMEQMYTL (207 aa)) are required for RHOG activation and mediates interaction with EPHA2. The region spanning 284-468 (KRQEAMFEIL…SKLVRQCNEG (185 aa)) is the DH domain. The PH domain occupies 501–620 (WLLKRGELFL…WIVALTHSER (120 aa)). The 61-residue stretch at 629–689 (GDLPQVEITK…PEDFARFITS (61 aa)) folds into the SH3 domain. The PDZ-binding motif motif lies at 707-709 (TDV).

In terms of assembly, interacts with ELMO2, EPHA2, RAC1 and RHOG; mediates activation of RAC1 by EPHA2. Interacts with TAX1BP3 (via PDZ domain). May interact with CDC42; stimulated by HPV16 E6.

Its subcellular location is the cytoplasm. In terms of biological role, guanyl-nucleotide exchange factor of the RHOG GTPase stimulating the exchange of RHOG-associated GDP for GTP. May play a role in chemotactic cell migration by mediating the activation of RAC1 by EPHA2. May also activate CDC42 and mediate activation of CDC42 by the viral protein HPV16 E6. The protein is Rho guanine nucleotide exchange factor 16 (ARHGEF16) of Homo sapiens (Human).